The chain runs to 205 residues: SREBP regulating gene protein (205 aa).

The Cytoplasmic segment spans residues 1 to 16 (MVNLAAMVWRRLLRKR). Residues 17–35 (WVLALVFGLSLVYFLTSTF) traverse the membrane as a helical segment. The Lumenal segment spans residues 36–205 (KQEERAVRDR…GESPPELFPA (170 aa)). An N-linked (GlcNAc...) asparagine glycan is attached at Asn-67.

It belongs to the SPRING family. In terms of assembly, interacts with SCAP.

It is found in the golgi apparatus membrane. Positively regulates hepatic SREBP signaling pathway by modulating the proper localization of SCAP (SREBP cleavage-activating protein) to the endoplasmic reticulum, thereby controlling the level of functional SCAP. This chain is SREBP regulating gene protein, found in Bos taurus (Bovine).